Consider the following 636-residue polypeptide: MGQGPRSPHKVGRRFPAGGKRGRGAKGSGRPLPGRKRQPWPPPDGRSEPAPDSHPHLSPEALGYFRRALSALKEAPETGEERDLMVHNIMKEVETQALALSTNRTGSEMLQELLGFSPLKPLCRVWAALRSNLRTVACHRCGVHVLQSALLQLPRLLGSAAEEEEEEEEDGKDGPTETLEELVLGLAAEVCDDFLVYCGDTHGSFVVRTLLQVLGGTILESERARPRGSQSSEAQKTPAQECKPADFEVPETFLNRLQDLSSSFLKDIAVFITDKISSFCLQVALQVLHRKLPQFCAHLCNAVIGYLSTRGSSVDGSPLLLFLRDQTSSRLLEQVLLVLEPPRLQSLFEEHLQGQLQTLAAHPIANFPLQRLLDAVTTPELLSPVFEELSPVLEAVLAQGHPGVVIALVGACRRVGAYQAKVLQLLLEAFHCAEPSSRQVACVPLFATLMAYEVYYGLTEEEGAVPAEHQVAMAAARALGDVTVLGSLLLQHLLHFSTPGLVLRSLGALTGPQLLSLAQSPAGSHVLDAILTSPSVTRKLRRRVLQNLKGQYVALACSRHGSRVLDAIWSGAALRARKEIAAELGEQNQELIRDPFGHHVARNVALTTFLKRREAWEQQQGAVAKRRRALNSILED.

The disordered stretch occupies residues 1–59; the sequence is MGQGPRSPHKVGRRFPAGGKRGRGAKGSGRPLPGRKRQPWPPPDGRSEPAPDSHPHLSP. The residue at position 7 (serine 7) is a Phosphoserine. Basic and acidic residues predominate over residues 45–57; that stretch reads GRSEPAPDSHPHL. Pumilio repeat units follow at residues 92–123 and 189–223; these read EVET…KPLC and EVCD…ESER. Positions 222–241 are disordered; sequence ERARPRGSQSSEAQKTPAQE. Over residues 228 to 238 the composition is skewed to polar residues; that stretch reads GSQSSEAQKTP. Pumilio repeat units follow at residues 313 to 348, 351 to 386, 509 to 544, and 547 to 581; these read SVDG…QSLF, HLQG…SPVF, LTGP…RRRV, and NLKG…KEIA.

This sequence belongs to the NOP9 family.

In Homo sapiens (Human), this protein is Nucleolar protein 9 (NOP9).